The chain runs to 240 residues: MSAQPIYKRVLLKASGEALMGSQGFGIDVAVADRIASDIAQARAMGVEVGVVVGGGNIFRGVAVASKGGDRVTGDHMGMLATVINALALATSLRKLDIDTVVLSAIAMPEICESFSQRATLYHLSLGRVVIFAGGTGNPFFTTDSAAALRAAEMGAEAIFKGTQVDGIYSADPKKDPSATRFDRLTHSEVLEKGLAVMDVAAVALARENAIPIVVFSIHEKDGFTEILTGGGRATIVTDS.

ATP is bound at residue 13–16; it reads KASG. An involved in allosteric activation by GTP region spans residues 21 to 26; sequence GSQGFG. Gly-55 is a UMP binding site. Residues Gly-56 and Arg-60 each coordinate ATP. Residues Asp-75 and 136 to 143 contribute to the UMP site; that span reads TGNPFFTT. ATP is bound by residues Thr-163, Gln-164, Tyr-169, and Asp-172.

It belongs to the UMP kinase family. Homohexamer.

The protein localises to the cytoplasm. It catalyses the reaction UMP + ATP = UDP + ADP. Its pathway is pyrimidine metabolism; CTP biosynthesis via de novo pathway; UDP from UMP (UMPK route): step 1/1. With respect to regulation, allosterically activated by GTP. Inhibited by UTP. Catalyzes the reversible phosphorylation of UMP to UDP. The sequence is that of Uridylate kinase from Sinorhizobium medicae (strain WSM419) (Ensifer medicae).